The following is an 846-amino-acid chain: Penicillin G acylase (846 aa).

The N-terminal stretch at 1 to 26 (MKNRNRMIVNCVTASLMYYWSLPALA) is a signal peptide. Residue E178 coordinates Ca(2+). Residues 236–289 (ALLPRYDLPAPMLDRPAKGADGALLALTAGKNRETIAAQFAQGGANGLAGYPTT) constitute a propeptide, spacer peptide. S290 (nucleophile) is an active-site residue. Residues D362, V364, D365, P494, and D541 each coordinate Ca(2+).

This sequence belongs to the peptidase S45 family. In terms of assembly, heterodimer of an alpha subunit and a beta subunit processed from the same precursor. Requires Ca(2+) as cofactor.

It localises to the periplasm. It carries out the reaction a penicillin + H2O = 6-aminopenicillanate + a carboxylate. This Escherichia coli protein is Penicillin G acylase (pac).